Here is a 372-residue protein sequence, read N- to C-terminus: tRNA pseudouridine synthase D (372 aa).

Catalysis depends on Asp-85, which acts as the Nucleophile. One can recognise a TRUD domain in the interval 160–330; it reads GFTNYFGYQR…MQGSRRFMWG (171 aa).

It belongs to the pseudouridine synthase TruD family.

The catalysed reaction is uridine(13) in tRNA = pseudouridine(13) in tRNA. Functionally, responsible for synthesis of pseudouridine from uracil-13 in transfer RNAs. The polypeptide is tRNA pseudouridine synthase D (Campylobacter jejuni (strain RM1221)).